Consider the following 415-residue polypeptide: Citrate (Re)-synthase (415 aa).

The Pyruvate carboxyltransferase domain occupies 4–275 (IFIIDVTNRD…GHEVDLSKAW (272 aa)).

Belongs to the alpha-IPM synthase/homocitrate synthase family. Mn(2+) serves as cofactor.

The catalysed reaction is oxaloacetate + acetyl-CoA + H2O = citrate + CoA + H(+). Its activity is regulated as follows. Inhibited by citrate and under aerobic conditions. In terms of biological role, catalyzes the condensation of the acetyl group of acetyl coenzyme A (acetyl-CoA) with oxaloacetate to form citrate. This enzyme is highly Re-face stereospecific with respect to the C-2 of oxaloacetate. The protein is Citrate (Re)-synthase of Dehalococcoides mccartyi (strain CBDB1).